The sequence spans 1387 residues: Magnesium-chelatase subunit ChlH, chloroplastic (1387 aa).

Residues 1–50 (MSSLVSTPFTTATGVQKKLGAPVPLHSFLLSRRQPAAGAGRGRAAAAAIR) constitute a chloroplast transit peptide.

It belongs to the Mg-chelatase subunit H family. As to quaternary structure, the magnesium chelatase complex is a heterotrimer consisting of subunits CHLI, CHLD and CHLH.

The protein resides in the plastid. It localises to the chloroplast stroma. It is found in the chloroplast membrane. The enzyme catalyses protoporphyrin IX + Mg(2+) + ATP + H2O = Mg-protoporphyrin IX + ADP + phosphate + 3 H(+). It participates in porphyrin-containing compound metabolism; chlorophyll biosynthesis. Functionally, involved in chlorophyll biosynthesis. Catalyzes the insertion of magnesium ion into protoporphyrin IX to yield Mg-protoporphyrin IX. The reaction takes place in two steps, with an ATP-dependent activation followed by an ATP-dependent chelation step. May be involved in the plastid-to-nucleus retrograde signaling. In Oryza sativa subsp. indica (Rice), this protein is Magnesium-chelatase subunit ChlH, chloroplastic (CHLH).